Here is a 329-residue protein sequence, read N- to C-terminus: Tyrosine--tRNA ligase (329 aa).

Residues Tyr-31, Tyr-157, Gln-161, Asp-164, and Gln-179 each coordinate L-tyrosine. A 'KMSKS' region motif is present at residues 220 to 224 (KMSKS). An ATP-binding site is contributed by Lys-223.

The protein belongs to the class-I aminoacyl-tRNA synthetase family. TyrS type 4 subfamily. In terms of assembly, homodimer.

The protein localises to the cytoplasm. The enzyme catalyses tRNA(Tyr) + L-tyrosine + ATP = L-tyrosyl-tRNA(Tyr) + AMP + diphosphate + H(+). In terms of biological role, catalyzes the attachment of tyrosine to tRNA(Tyr) in a two-step reaction: tyrosine is first activated by ATP to form Tyr-AMP and then transferred to the acceptor end of tRNA(Tyr). This chain is Tyrosine--tRNA ligase, found in Picrophilus torridus (strain ATCC 700027 / DSM 9790 / JCM 10055 / NBRC 100828 / KAW 2/3).